An 842-amino-acid polypeptide reads, in one-letter code: Alpha-glucan phosphorylase, H isozyme (842 aa).

At Lys688 the chain carries N6-(pyridoxal phosphate)lysine.

The protein belongs to the glycogen phosphorylase family. The cofactor is pyridoxal 5'-phosphate.

It is found in the cytoplasm. The enzyme catalyses [(1-&gt;4)-alpha-D-glucosyl](n) + phosphate = [(1-&gt;4)-alpha-D-glucosyl](n-1) + alpha-D-glucose 1-phosphate. Phosphorylase is an important allosteric enzyme in carbohydrate metabolism. Enzymes from different sources differ in their regulatory mechanisms and in their natural substrates. However, all known phosphorylases share catalytic and structural properties. Its function is as follows. The H isoform exhibits higher affinity for branched polyglucans such as soluble starch or glycogen. The sequence is that of Alpha-glucan phosphorylase, H isozyme from Vicia faba (Broad bean).